A 254-amino-acid chain; its full sequence is Zinc transporter GufA (254 aa).

Helical transmembrane passes span 4–24, 74–94, 112–132, 143–163, 176–196, 198–218, and 234–254; these read GLVA…PVLV, VAAG…LMPH, ALLF…AVGV, LSVA…VALA, FLAL…VLAL, LSSA…LYVI, and EATT…MSLG. Residues asparagine 123, glutamate 126, glutamine 152, asparagine 153, glutamate 156, and glutamate 185 each coordinate Zn(2+).

The protein belongs to the ZIP transporter (TC 2.A.5) family. As to quaternary structure, homodimer.

The protein localises to the cell inner membrane. Mediates the uptake of Zn(2+). This is Zinc transporter GufA (gufA) from Myxococcus xanthus.